The chain runs to 136 residues: Keratin-associated protein 9-3 (136 aa).

Tandem repeats lie at residues 3-7, 21-25, 31-35, 36-40, 41-45, 46-50, 87-91, 97-101, 107-111, 117-121, and 126-130. The tract at residues 21-130 is 11 X 5 AA repeats of C-C-[AEQVR]-[ALPTV]-[AGHST]; that stretch reads CCQPTCTQSS…ACCCYCCQPS (110 aa).

It belongs to the KRTAP type 9 family. In terms of assembly, interacts with hair keratins.

Functionally, in the hair cortex, hair keratin intermediate filaments are embedded in an interfilamentous matrix, consisting of hair keratin-associated proteins (KRTAP), which are essential for the formation of a rigid and resistant hair shaft through their extensive disulfide bond cross-linking with abundant cysteine residues of hair keratins. The matrix proteins include the high-sulfur and high-glycine-tyrosine keratins. The chain is Keratin-associated protein 9-3 from Mus musculus (Mouse).